Reading from the N-terminus, the 302-residue chain is Sulfate adenylyltransferase subunit 2 (302 aa).

It belongs to the PAPS reductase family. CysD subfamily. As to quaternary structure, heterodimer composed of CysD, the smaller subunit, and CysN.

It catalyses the reaction sulfate + ATP + H(+) = adenosine 5'-phosphosulfate + diphosphate. It participates in sulfur metabolism; hydrogen sulfide biosynthesis; sulfite from sulfate: step 1/3. With CysN forms the ATP sulfurylase (ATPS) that catalyzes the adenylation of sulfate producing adenosine 5'-phosphosulfate (APS) and diphosphate, the first enzymatic step in sulfur assimilation pathway. APS synthesis involves the formation of a high-energy phosphoric-sulfuric acid anhydride bond driven by GTP hydrolysis by CysN coupled to ATP hydrolysis by CysD. In Shewanella halifaxensis (strain HAW-EB4), this protein is Sulfate adenylyltransferase subunit 2.